Reading from the N-terminus, the 420-residue chain is Diphosphomevalonate decarboxylase 2 (420 aa).

Position 25–28 (25–28) interacts with (R)-5-diphosphomevalonate; that stretch reads YWGK. Residues 42–50 carry the Peroxisomal targeting signal PTS2 motif; sequence SVTLDPDHL. (R)-5-diphosphomevalonate contacts are provided by residues arginine 80, 163 to 168, and threonine 219; that span reads SGSACR.

The protein belongs to the diphosphomevalonate decarboxylase family. As to quaternary structure, homodimer.

The protein resides in the peroxisome. The enzyme catalyses (R)-5-diphosphomevalonate + ATP = isopentenyl diphosphate + ADP + phosphate + CO2. It functions in the pathway isoprenoid biosynthesis; isopentenyl diphosphate biosynthesis via mevalonate pathway; isopentenyl diphosphate from (R)-mevalonate: step 3/3. Performs the first committed step in the biosynthesis of isoprene-containing compounds such as sterols and terpenoids. Component of the triterpenes (e.g. ginsenosides or panaxosides) and phytosterols biosynthetic pathways. Promotes the accumulation of stigmasterol and beta-sitosterol. This Panax ginseng (Korean ginseng) protein is Diphosphomevalonate decarboxylase 2.